A 618-amino-acid polypeptide reads, in one-letter code: Alpha-dioxygenase PIOX (618 aa).

Catalysis depends on His157, which acts as the Proton acceptor. Asp158 contributes to the Ca(2+) binding site. Residue His162 coordinates heme b. Ca(2+)-binding residues include Thr210, Trp212, Asp214, and Ser216. His311 is a hexadecanoate binding site. His382, Arg479, and Arg483 together coordinate heme b. Hexadecanoate is bound at residue Glu599.

The protein belongs to the peroxidase family. Requires heme b as cofactor. Ca(2+) serves as cofactor.

It carries out the reaction a 1,2-saturated fatty acid + O2 = a (2R)-2-hydroperoxy fatty acid. The catalysed reaction is (9Z,12Z)-octadecadienoate + O2 = (2R,9Z,12Z)-2-hydroperoxyoctadecadienoate. It catalyses the reaction hexadecanoate + O2 = (2R)-2-hydroperoxyhexadecanoate. The enzyme catalyses (9Z,12Z,15Z)-octadecatrienoate + O2 = (R)-2-hydroperoxy-(9Z,12Z,15Z)-octadecatrienoate. It carries out the reaction tetradecanoate + O2 = (2R)-2-hydroperoxytetradecanoate. The catalysed reaction is octadecanoate + O2 = (2R)-2-hydroperoxyoctadecanoate. It catalyses the reaction (9Z)-octadecenoate + O2 = (2R,9Z)-2-hydroperoxyoctadecenoate. Functionally, alpha-dioxygenase that catalyzes the primary oxygenation step of a variety of 14-20 carbon fatty acids, containing up to three unsaturated bonds, into their corresponding 2R-hydroperoxides. Involved in the production of oxylipins that function in cell signaling, wound healing, and protection from infection. The sequence is that of Alpha-dioxygenase PIOX from Oryza sativa subsp. japonica (Rice).